A 360-amino-acid polypeptide reads, in one-letter code: Deoxyhypusine hydroxylase (360 aa).

3 HEAT-like PBS-type repeats span residues 56–82 (LKHE…ILQD), 89–115 (VRHE…YRSD), and 213–245 (ERYR…GLQD). The Fe cation site is built by histidine 58, glutamate 59, histidine 91, and glutamate 92. Fe cation-binding residues include histidine 252, glutamate 253, histidine 285, and glutamate 286.

Belongs to the deoxyhypusine hydroxylase family. The cofactor is Fe(2+).

It localises to the cytoplasm. The protein resides in the nucleus. It carries out the reaction [eIF5A protein]-deoxyhypusine + AH2 + O2 = [eIF5A protein]-hypusine + A + H2O. It participates in protein modification; eIF5A hypusination. Functionally, catalyzes the hydroxylation of the N(6)-(4-aminobutyl)-L-lysine intermediate to form hypusine, an essential post-translational modification only found in mature eIF-5A factor. This Mycosarcoma maydis (Corn smut fungus) protein is Deoxyhypusine hydroxylase.